The primary structure comprises 264 residues: Late embryogenesis abundant protein D-34 (264 aa).

The segment covering 1–16 has biased composition (low complexity); that stretch reads MSQGQPRRPQQPAGQG. The disordered stretch occupies residues 1–23; the sequence is MSQGQPRRPQQPAGQGENQEPIK. SMP domains lie at 22 to 76, 138 to 194, and 203 to 261; these read IKYG…RNEQ, ITIG…AHNA, and IKLN…LNEN.

Belongs to the LEA type SMP family.

Its function is as follows. LEA proteins are late embryonic proteins abundant in higher plant seed embryos. There are two subsets of LEA proteins (5a and 5b), the first ones are expressed when the cotyledon weight reach 80 mg and the second set are expressed above 100 mg. The function of those proteins is not known. The protein is Late embryogenesis abundant protein D-34 of Gossypium hirsutum (Upland cotton).